Reading from the N-terminus, the 1202-residue chain is MLFAKLLLKPVQILFAYAKAKSKEISIKEANLLIFQDETDNLRKISTPNKLAVSLAGGLKALLSSNQLCHAFHYHNKKIRLVDTSLNNLPVPILLPKLINYLLARKSQKSAAEWEEIERALLSCCKRSKDPSILFPTDVPCSLDDDVSFLTFKGHKNHLENRSFFHDSESDNFKVVLSNCAINSKEDNNLVTEDRVNLGAKLLLVPVQNLIKLLKVSKISVDLAVIDHSFQDQKLTLEVGNGGLEVVKLFGGWIRILESECLGHVFSFKKTMKRKEVALVNRKADIDTTDLFIALRQLVDSKFKSYGIKAQKHAINRISKLGKMITSNHAEEKLTTIPITEAKKESVSNTALIARKNIIRERKYLSRMFDIFEHIDSYFNHEINMLLVDLLLEPLQVAFVYKNLARRWISLEEIENLWLKVFDSSHPLGKSITSTLQAIGTRKILTQLSINMIPRYNQDNCSAGDIYILCFSENCWLYSVLQKTIDHWVNENVELFYKKFEILKSLLIEDIANSTFSKEVSLNSSLRWYCVAILVTPLQLIINHLKDKTEMLSLDAVMTLILGKNTREVNSSIEELKITDCLSFLLEHNIFNTFLVYNEGIVKLNKDFDDFTPLNLLKCVNYSLMEFQKNSTFDMLEKLYEIGREIDMSKFSTLKYNLQLPNVDLLKESEAVSETKNTKNNTFILKSDLKEEERLTNFTIEEINKHKAIGVALRKLLEEADTSSNFSSSNNHVLDSSKHTVSSASTSSRKFIENYKSLESIGLTSFVKDNKLKASKELQKLIEENVFPKNLILFIFRKCVIGIKSFEKLQSYVFTYYCERYPKLILKRVLRFLEEIGFITSQYPRKLTDTGALFLKHPSEWGVLQHTFISSNFFENVPCYISLEQSLQNFQNDIRPDTVRTTAMKAIIKKLLKSLRKLEGPVKIACFGSYRTGLMTKNSDLDLVIYSSKEALLPYYDRVKSIIKNEFSNVMPIRGARIPIIKFTGQYNIHCDLSFDNLLPIHNSDLILNYSLIDERVKTLLMLVKYWASNRLIDKTHHAFPSSYTWCIMVIFYLQQIPEPILPNLQKLSTQYSKIVRDNDYGNVNCWFNRDTECYRGSMQKGRKNIALLLRGFFCYYGLTTQYSFDWEAYMIDISSSQLKRKSTEFKDCPFVVLDPFLKKKNLTKALTQKSVKVVRYELERACRILSDPKCNLDHLLDPLIQ.

Residues N1105 to K1159 enclose the PAP-associated domain.

The polypeptide is Caffeine-induced protein 16 (cid16) (Schizosaccharomyces pombe (strain 972 / ATCC 24843) (Fission yeast)).